Reading from the N-terminus, the 566-residue chain is Urease subunit alpha (566 aa).

A Urease domain is found at 128–566 (GGIDSHVHFI…LPMAQRYFLF (439 aa)). Residues His133, His135, and Lys216 each coordinate Ni(2+). Lys216 carries the post-translational modification N6-carboxylysine. His218 provides a ligand contact to substrate. Ni(2+)-binding residues include His245 and His271. Catalysis depends on His319, which acts as the Proton donor. Asp359 is a binding site for Ni(2+).

It belongs to the metallo-dependent hydrolases superfamily. Urease alpha subunit family. In terms of assembly, heterotrimer of UreA (gamma), UreB (beta) and UreC (alpha) subunits. Three heterotrimers associate to form the active enzyme. Requires Ni cation as cofactor. In terms of processing, carboxylation allows a single lysine to coordinate two nickel ions.

The protein resides in the cytoplasm. It carries out the reaction urea + 2 H2O + H(+) = hydrogencarbonate + 2 NH4(+). It participates in nitrogen metabolism; urea degradation; CO(2) and NH(3) from urea (urease route): step 1/1. This is Urease subunit alpha from Nitrosococcus oceani (strain ATCC 19707 / BCRC 17464 / JCM 30415 / NCIMB 11848 / C-107).